A 190-amino-acid chain; its full sequence is Class III hydrophobin F (190 aa).

The signal sequence occupies residues 1–18; sequence MRPITILCTLATLSTTLA. Cystine bridges form between Cys-54-Cys-115, Cys-62-Cys-109, Cys-63-Cys-97, and Cys-116-Cys-131.

The protein belongs to the fungal hydrophobin family. In terms of assembly, self-assembles to form functional amyloid fibrils called rodlets. Self-assembly into fibrillar rodlets occurs spontaneously at hydrophobic:hydrophilic interfaces and the rodlets further associate laterally to form amphipathic monolayers.

The protein resides in the secreted. It is found in the cell wall. Its function is as follows. Aerial growth, conidiation, and dispersal of filamentous fungi in the environment rely upon a capability of their secreting small amphipathic proteins called hydrophobins (HPBs) with low sequence identity. Class I can self-assemble into an outermost layer of rodlet bundles on aerial cell surfaces, conferring cellular hydrophobicity that supports fungal growth, development and dispersal; whereas Class II form highly ordered films at water-air interfaces through intermolecular interactions but contribute nothing to the rodlet structure. RodF and rodG belong to Class III, which contains hydrophobins with intermediate (between classes I and II) or atypical characteristics. RodF, unlike rodA, is not required for rodlet formation. The chain is Class III hydrophobin F from Aspergillus fumigatus (strain ATCC MYA-4609 / CBS 101355 / FGSC A1100 / Af293) (Neosartorya fumigata).